The sequence spans 96 residues: Large ribosomal subunit protein bL28 (96 aa).

Residues 1 to 23 (MSRVCELSGKAPMTGNTVSHANN) form a disordered region.

Belongs to the bacterial ribosomal protein bL28 family.

In Cereibacter sphaeroides (strain ATCC 17029 / ATH 2.4.9) (Rhodobacter sphaeroides), this protein is Large ribosomal subunit protein bL28.